Consider the following 1475-residue polypeptide: Protein STU1 (1475 aa).

2 disordered regions span residues 870–913 (REST…EPDL) and 1113–1134 (DGES…NRPA). Over residues 887-896 (DGAHGGDARD) the composition is skewed to basic and acidic residues.

This sequence belongs to the CLASP family. Interacts with microtubules.

It localises to the cytoplasm. The protein resides in the cytoskeleton. It is found in the nucleus. The protein localises to the spindle. Its function is as follows. Microtubule binding protein that promotes the stabilization of dynamic microtubules. Required for mitotic spindle formation. The protein is Protein STU1 (STU1) of Eremothecium gossypii (strain ATCC 10895 / CBS 109.51 / FGSC 9923 / NRRL Y-1056) (Yeast).